A 122-amino-acid polypeptide reads, in one-letter code: Mating-type protein A1 (122 aa).

Residues 62–121 (NHKRGCNIDKKTKDMLNKVYEQKQYLTKEEREFVAKKCNLTPLQVRVWFANKRIRNKNTK) constitute a DNA-binding region (homeobox).

This sequence belongs to the MATA1 family. In terms of assembly, forms a heterodimer with ALPHA2.

The protein resides in the nucleus. Functionally, mating type proteins are sequence specific DNA-binding proteins that act as master switches in yeast differentiation by controlling gene expression in a cell type-specific fashion. Transcriptional corepressor that acts in conjunction with ALPHA2 to repress transcription of haploid-specific genes and of MATALPHA1. The chain is Mating-type protein A1 (MATA1) from Nakaseomyces delphensis (Yeast).